Consider the following 255-residue polypeptide: tRNA (guanine-N(7)-)-methyltransferase (255 aa).

Residues 1-11 show a composition bias toward basic and acidic residues; that stretch reads MSISDNSRDQL. Residues 1-25 are disordered; that stretch reads MSISDNSRDQLGELPAGRPLQSDFD. The S-adenosyl-L-methionine site is built by glutamate 83, glutamate 108, aspartate 135, and aspartate 158. Aspartate 158 is an active-site residue. Lysine 162 is a substrate binding site. Positions 164-169 are interaction with RNA; it reads RHNKRR. Substrate contacts are provided by residues aspartate 194 and 232–235; that span reads TKFE.

Belongs to the class I-like SAM-binding methyltransferase superfamily. TrmB family.

The catalysed reaction is guanosine(46) in tRNA + S-adenosyl-L-methionine = N(7)-methylguanosine(46) in tRNA + S-adenosyl-L-homocysteine. It functions in the pathway tRNA modification; N(7)-methylguanine-tRNA biosynthesis. In terms of biological role, catalyzes the formation of N(7)-methylguanine at position 46 (m7G46) in tRNA. This is tRNA (guanine-N(7)-)-methyltransferase from Corynebacterium glutamicum (strain ATCC 13032 / DSM 20300 / JCM 1318 / BCRC 11384 / CCUG 27702 / LMG 3730 / NBRC 12168 / NCIMB 10025 / NRRL B-2784 / 534).